Here is a 145-residue protein sequence, read N- to C-terminus: Deoxyuridine 5'-triphosphate nucleotidohydrolase (145 aa).

Residues 65 to 67 (RSG), asparagine 78, and 82 to 84 (TID) contribute to the substrate site.

Belongs to the dUTPase family. It depends on Mg(2+) as a cofactor.

The enzyme catalyses dUTP + H2O = dUMP + diphosphate + H(+). Its pathway is pyrimidine metabolism; dUMP biosynthesis; dUMP from dCTP (dUTP route): step 2/2. Functionally, this enzyme is involved in nucleotide metabolism: it produces dUMP, the immediate precursor of thymidine nucleotides and it decreases the intracellular concentration of dUTP so that uracil cannot be incorporated into DNA. The sequence is that of Deoxyuridine 5'-triphosphate nucleotidohydrolase from Clostridium tetani (strain Massachusetts / E88).